Reading from the N-terminus, the 303-residue chain is Probable serine/threonine-protein kinase FPV212 (303 aa).

In terms of domain architecture, Protein kinase spans tryptophan 25–leucine 303. ATP is bound by residues leucine 31–valine 39 and lysine 54. The active-site Proton acceptor is aspartate 160.

The protein belongs to the protein kinase superfamily. Ser/Thr protein kinase family. Poxviruses subfamily.

The enzyme catalyses L-seryl-[protein] + ATP = O-phospho-L-seryl-[protein] + ADP + H(+). The catalysed reaction is L-threonyl-[protein] + ATP = O-phospho-L-threonyl-[protein] + ADP + H(+). The chain is Probable serine/threonine-protein kinase FPV212 from Vertebrata (FPV).